The following is a 126-amino-acid chain: Adenosine 5'-monophosphoramidase HINT1 (126 aa).

Ala2 carries the N-acetylalanine modification. The HIT domain occupies Ile18–Gly126. An N6-acetyllysine mark is found at Lys21 and Lys30. An AMP-binding site is contributed by Asp43–Ile44. 2 positions are modified to phosphoserine: Ser45 and Ser72. AMP-binding positions include Asn99, Gly105–Ser107, and His112–His114. The Histidine triad motif signature appears at His110–His114. His112 acts as the Tele-AMP-histidine intermediate in catalysis.

This sequence belongs to the HINT family. In terms of assembly, homodimer. Interacts with CDK7. Interacts with RUVBL1 and RUVBL2 and is associated with the LEF1/TCF1-CTNNB1 complex and with a KAT5 histone acetyltransferase complex. Identified in a complex with MITF and CTNNB1. Interacts with CDC34 and RBX1, and is part of a SCF (SKP2-CUL1-F-box protein) E3 ubiquitin-protein ligase complex. Interacts with SUMO1, SUMO2 and RGS17. Interacts with the Ten-1 ICD form of TENM1. Interacts with CALM1; interaction increases in the presence of calcium ions. As to expression, widely expressed.

It is found in the cytoplasm. It localises to the nucleus. The enzyme catalyses adenosine 5'-phosphoramidate + H2O = AMP + NH4(+). Its function is as follows. Exhibits adenosine 5'-monophosphoramidase activity, hydrolyzing purine nucleotide phosphoramidates with a single phosphate group such as adenosine 5'monophosphoramidate (AMP-NH2) to yield AMP and NH2. Hydrolyzes adenosine 5'monophosphomorpholidate (AMP-morpholidate) and guanosine 5'monophosphomorpholidate (GMP-morpholidate). Hydrolyzes lysyl-AMP (AMP-N-epsilon-(N-alpha-acetyl lysine methyl ester)) generated by lysine tRNA ligase, as well as Met-AMP, His-AMP and Asp-AMP, lysyl-GMP (GMP-N-epsilon-(N-alpha-acetyl lysine methyl ester)) and AMP-N-alanine methyl ester. Can also convert adenosine 5'-O-phosphorothioate and guanosine 5'-O-phosphorothioate to the corresponding nucleoside 5'-O-phosphates with concomitant release of hydrogen sulfide. In addition, functions as a scaffolding protein that modulates transcriptional activation by the LEF1/TCF1-CTNNB1 complex and by the complex formed with MITF and CTNNB1. Modulates p53/TP53 levels and p53/TP53-mediated apoptosis. Modulates proteasomal degradation of target proteins by the SCF (SKP2-CUL1-F-box protein) E3 ubiquitin-protein ligase complex. Also exhibits SUMO-specific isopeptidase activity, deconjugating SUMO1 from RANGAP1 and RGS17. This Bos taurus (Bovine) protein is Adenosine 5'-monophosphoramidase HINT1 (HINT1).